Reading from the N-terminus, the 366-residue chain is D-alanine--D-alanine ligase (366 aa).

The ATP-grasp domain maps to 148 to 357 (KMTFEQAGLA…FPELVDRLIQ (210 aa)). Position 184–239 (184–239 (EAALGYPAFVKPANLGSSVGIAKVRSRQELEAALDNAASYDRRLVVEAGVVAREVE)) interacts with ATP. 3 residues coordinate Mg(2+): D310, E324, and N326.

It belongs to the D-alanine--D-alanine ligase family. It depends on Mg(2+) as a cofactor. Requires Mn(2+) as cofactor.

The protein resides in the cytoplasm. The enzyme catalyses 2 D-alanine + ATP = D-alanyl-D-alanine + ADP + phosphate + H(+). It participates in cell wall biogenesis; peptidoglycan biosynthesis. Cell wall formation. In Nostoc punctiforme (strain ATCC 29133 / PCC 73102), this protein is D-alanine--D-alanine ligase.